The chain runs to 150 residues: Transcriptional repressor NrdR (150 aa).

A zinc finger lies at 3-34 (CPFCHHPQSRVIDSRTVENGFVTRRRRQCTKC). Residues 46 to 136 (LLVEKRNGVT…VYKSFSSMED (91 aa)) form the ATP-cone domain.

It belongs to the NrdR family. Zn(2+) is required as a cofactor.

In terms of biological role, negatively regulates transcription of bacterial ribonucleotide reductase nrd genes and operons by binding to NrdR-boxes. The protein is Transcriptional repressor NrdR of Corynebacterium kroppenstedtii (strain DSM 44385 / JCM 11950 / CIP 105744 / CCUG 35717).